The chain runs to 356 residues: Probable cysteine protease RDL6 (356 aa).

Positions Met1–Ala26 are cleaved as a signal peptide. The propeptide at Met27–Gln132 is activation peptide. Asn37 and Asn86 each carry an N-linked (GlcNAc...) asparagine glycan. 3 disulfides stabilise this stretch: Cys154–Cys195, Cys188–Cys229, and Cys288–Cys339. Residue Cys157 is part of the active site. Catalysis depends on residues His294 and Asn314.

Belongs to the peptidase C1 family.

Probable thiol protease. The polypeptide is Probable cysteine protease RDL6 (Arabidopsis thaliana (Mouse-ear cress)).